A 20-amino-acid polypeptide reads, in one-letter code: Serum amyloid P-component (20 aa).

The Pentraxin (PTX) domain occupies 1–20; it reads ZPIDLMGKVFVFDKELSPBI.

This sequence belongs to the pentraxin family. Homopentamer. Pentraxin (or pentaxin) have a discoid arrangement of 5 non-covalently bound subunits.

The protein resides in the secreted. This is Serum amyloid P-component from Pleuronectes platessa (European plaice).